We begin with the raw amino-acid sequence, 293 residues long: Diaminopimelate epimerase (293 aa).

Asn17, Gln49, and Asn69 together coordinate substrate. The active-site Proton donor is Cys78. Substrate is bound by residues 79-80, Asn169, Asn203, and 221-222; these read GN and ER. Catalysis depends on Cys230, which acts as the Proton acceptor. Position 231–232 (231–232) interacts with substrate; sequence GS.

Belongs to the diaminopimelate epimerase family. In terms of assembly, homodimer.

It is found in the cytoplasm. The catalysed reaction is (2S,6S)-2,6-diaminopimelate = meso-2,6-diaminopimelate. The protein operates within amino-acid biosynthesis; L-lysine biosynthesis via DAP pathway; DL-2,6-diaminopimelate from LL-2,6-diaminopimelate: step 1/1. Catalyzes the stereoinversion of LL-2,6-diaminopimelate (L,L-DAP) to meso-diaminopimelate (meso-DAP), a precursor of L-lysine and an essential component of the bacterial peptidoglycan. This chain is Diaminopimelate epimerase, found in Methylobacterium sp. (strain 4-46).